Consider the following 380-residue polypeptide: Cytochrome b (380 aa).

The next 4 helical transmembrane spans lie at 34–54 (FGSL…FLAM), 78–99 (WLLR…YFHI), 114–134 (WNIG…GYVL), and 179–199 (FFTF…IHLL). The heme b site is built by His84 and His98. Positions 183 and 197 each coordinate heme b. Residue His202 coordinates a ubiquinone. Helical transmembrane passes span 227-247 (YKDL…STFA), 289-309 (LGGV…PIIH), 321-341 (IAKT…WIGG), and 348-368 (FITI…LLIP).

Belongs to the cytochrome b family. In terms of assembly, the cytochrome bc1 complex contains 3 respiratory subunits (MT-CYB, CYC1 and UQCRFS1), 2 core proteins (UQCRC1 and UQCRC2) and probably 6 low-molecular weight proteins. Heme b is required as a cofactor.

The protein localises to the mitochondrion inner membrane. Its function is as follows. Component of the ubiquinol-cytochrome c reductase complex (complex III or cytochrome b-c1 complex) that is part of the mitochondrial respiratory chain. The b-c1 complex mediates electron transfer from ubiquinol to cytochrome c. Contributes to the generation of a proton gradient across the mitochondrial membrane that is then used for ATP synthesis. This Rana amurensis (Siberian wood frog) protein is Cytochrome b (mt-cyb).